We begin with the raw amino-acid sequence, 102 residues long: MEQTEEHTDTHTDEQDEAVDRNDRKERIGVVESAKMDKTITVSVRRQMKHPMYGKYLERSSTFMAHDEGDEANEGDTVRIMETRPISKNKRWRLVEIIERAK.

Residues 1-27 (MEQTEEHTDTHTDEQDEAVDRNDRKER) are disordered.

It belongs to the universal ribosomal protein uS17 family. In terms of assembly, part of the 30S ribosomal subunit.

In terms of biological role, one of the primary rRNA binding proteins, it binds specifically to the 5'-end of 16S ribosomal RNA. The sequence is that of Small ribosomal subunit protein uS17 from Salinibacter ruber (strain DSM 13855 / M31).